A 635-amino-acid polypeptide reads, in one-letter code: Threonine--tRNA ligase (635 aa).

Residues 1 to 61 (MTVVRLPDGT…EIDSDLVLIT (61 aa)) form the TGS domain. The tract at residues 242-533 (DHRKLGKQLD…LIEHHAGALP (292 aa)) is catalytic. Residues Cys333, His384, and His510 each contribute to the Zn(2+) site.

This sequence belongs to the class-II aminoacyl-tRNA synthetase family. As to quaternary structure, homodimer. Zn(2+) serves as cofactor.

The protein resides in the cytoplasm. It catalyses the reaction tRNA(Thr) + L-threonine + ATP = L-threonyl-tRNA(Thr) + AMP + diphosphate + H(+). Catalyzes the attachment of threonine to tRNA(Thr) in a two-step reaction: L-threonine is first activated by ATP to form Thr-AMP and then transferred to the acceptor end of tRNA(Thr). Also edits incorrectly charged L-seryl-tRNA(Thr). This chain is Threonine--tRNA ligase, found in Nitrosomonas eutropha (strain DSM 101675 / C91 / Nm57).